A 209-amino-acid polypeptide reads, in one-letter code: Thiamine-phosphate synthase (209 aa).

4-amino-2-methyl-5-(diphosphooxymethyl)pyrimidine contacts are provided by residues 38–42 and Asn70; that span reads QLREK. The Mg(2+) site is built by Asp71 and Asp90. Position 109 (Ser109) interacts with 4-amino-2-methyl-5-(diphosphooxymethyl)pyrimidine. 135 to 137 lines the 2-[(2R,5Z)-2-carboxy-4-methylthiazol-5(2H)-ylidene]ethyl phosphate pocket; the sequence is TPT. Lys138 is a 4-amino-2-methyl-5-(diphosphooxymethyl)pyrimidine binding site. 2-[(2R,5Z)-2-carboxy-4-methylthiazol-5(2H)-ylidene]ethyl phosphate contacts are provided by residues Gly166 and 186–187; that span reads IS.

It belongs to the thiamine-phosphate synthase family. Mg(2+) serves as cofactor.

The enzyme catalyses 2-[(2R,5Z)-2-carboxy-4-methylthiazol-5(2H)-ylidene]ethyl phosphate + 4-amino-2-methyl-5-(diphosphooxymethyl)pyrimidine + 2 H(+) = thiamine phosphate + CO2 + diphosphate. The catalysed reaction is 2-(2-carboxy-4-methylthiazol-5-yl)ethyl phosphate + 4-amino-2-methyl-5-(diphosphooxymethyl)pyrimidine + 2 H(+) = thiamine phosphate + CO2 + diphosphate. It catalyses the reaction 4-methyl-5-(2-phosphooxyethyl)-thiazole + 4-amino-2-methyl-5-(diphosphooxymethyl)pyrimidine + H(+) = thiamine phosphate + diphosphate. It functions in the pathway cofactor biosynthesis; thiamine diphosphate biosynthesis; thiamine phosphate from 4-amino-2-methyl-5-diphosphomethylpyrimidine and 4-methyl-5-(2-phosphoethyl)-thiazole: step 1/1. Its function is as follows. Condenses 4-methyl-5-(beta-hydroxyethyl)thiazole monophosphate (THZ-P) and 2-methyl-4-amino-5-hydroxymethyl pyrimidine pyrophosphate (HMP-PP) to form thiamine monophosphate (TMP). This chain is Thiamine-phosphate synthase, found in Syntrophomonas wolfei subsp. wolfei (strain DSM 2245B / Goettingen).